The following is a 155-amino-acid chain: UPF0305 protein MTH_811 (155 aa).

Belongs to the UPF0305 family.

This is UPF0305 protein MTH_811 from Methanothermobacter thermautotrophicus (strain ATCC 29096 / DSM 1053 / JCM 10044 / NBRC 100330 / Delta H) (Methanobacterium thermoautotrophicum).